The primary structure comprises 110 residues: Lichenan-specific phosphotransferase enzyme IIA component (110 aa).

A PTS EIIA type-3 domain is found at 3-101 (EEMEQIIFQI…AAEIIELYEK (99 aa)). His-77 (tele-phosphohistidine intermediate; by HPr) is an active-site residue.

It is found in the cytoplasm. Its function is as follows. The phosphoenolpyruvate-dependent sugar phosphotransferase system (PTS), a major carbohydrate active -transport system, catalyzes the phosphorylation of incoming sugar substrates concomitant with their translocation across the cell membrane. This system is involved in lichenan transport. The protein is Lichenan-specific phosphotransferase enzyme IIA component (licA) of Bacillus subtilis (strain 168).